Reading from the N-terminus, the 262-residue chain is 2-oxo-tetronate isomerase (262 aa).

The active-site Proton donor/acceptor is glutamate 143. Mg(2+)-binding residues include glutamate 143, aspartate 178, glutamine 204, and glutamate 240. Glutamate 240 serves as the catalytic Proton donor/acceptor.

This sequence belongs to the hyi family. OtnI subfamily.

The enzyme catalyses 2-dehydro-L-erythronate = 3-dehydro-L-erythronate. The catalysed reaction is 2-dehydro-D-erythronate = 3-dehydro-D-erythronate. Functionally, catalyzes the isomerization of 2-oxo-tetronate to 3-oxo-tetronate. The sequence is that of 2-oxo-tetronate isomerase from Pectobacterium atrosepticum (strain SCRI 1043 / ATCC BAA-672) (Erwinia carotovora subsp. atroseptica).